Consider the following 150-residue polypeptide: Large ribosomal subunit protein bL9 (150 aa).

The protein belongs to the bacterial ribosomal protein bL9 family.

Functionally, binds to the 23S rRNA. In Shewanella piezotolerans (strain WP3 / JCM 13877), this protein is Large ribosomal subunit protein bL9.